The sequence spans 367 residues: Succinyl-diaminopimelate desuccinylase (367 aa).

Residue His67 coordinates Zn(2+). The active site involves Asp69. Asp98 provides a ligand contact to Zn(2+). Glu128 acts as the Proton acceptor in catalysis. Positions 129, 157, and 342 each coordinate Zn(2+).

This sequence belongs to the peptidase M20A family. DapE subfamily. In terms of assembly, homodimer. The cofactor is Zn(2+). Requires Co(2+) as cofactor.

The catalysed reaction is N-succinyl-(2S,6S)-2,6-diaminopimelate + H2O = (2S,6S)-2,6-diaminopimelate + succinate. Its pathway is amino-acid biosynthesis; L-lysine biosynthesis via DAP pathway; LL-2,6-diaminopimelate from (S)-tetrahydrodipicolinate (succinylase route): step 3/3. Catalyzes the hydrolysis of N-succinyl-L,L-diaminopimelic acid (SDAP), forming succinate and LL-2,6-diaminopimelate (DAP), an intermediate involved in the bacterial biosynthesis of lysine and meso-diaminopimelic acid, an essential component of bacterial cell walls. The sequence is that of Succinyl-diaminopimelate desuccinylase from Campylobacter hominis (strain ATCC BAA-381 / DSM 21671 / CCUG 45161 / LMG 19568 / NCTC 13146 / CH001A).